A 144-amino-acid chain; its full sequence is Large ribosomal subunit protein uL24 (144 aa).

The interval 1–22 (MKFNKMVSSDRGKNRKRHFNAP) is disordered. Positions 13 to 22 (KNRKRHFNAP) are enriched in basic residues.

Belongs to the universal ribosomal protein uL24 family.

The protein is Large ribosomal subunit protein uL24 (RPL26) of Littorina littorea (Common periwinkle).